A 397-amino-acid polypeptide reads, in one-letter code: Serpin B10 (397 aa).

Residues 62–85 are disordered; that stretch reads RDQGVKSSPESEKKRKMEFNSSNS. A compositionally biased stretch (basic and acidic residues) spans 70 to 79; the sequence is PESEKKRKME. Positions 74 to 77 match the Nuclear localization signal motif; the sequence is KKRK.

Belongs to the serpin family. Ov-serpin subfamily.

The protein localises to the nucleus. It is found in the cytoplasm. Functionally, protease inhibitor that may play a role in the regulation of protease activities during hematopoiesis and apoptosis induced by TNF. May regulate protease activities in the cytoplasm and in the nucleus. This chain is Serpin B10 (SERPINB10), found in Papio anubis (Olive baboon).